The following is a 661-amino-acid chain: Zeaxanthin epoxidase, chloroplastic (661 aa).

The transit peptide at 1–50 (MASTLFYNSMNLSAAVFSRTHFPIPINKDFPLEFSPCIHTDYHLRSRTRS) directs the protein to the chloroplast. FAD contacts are provided by residues 82–110 (RILV…VVFE) and 360–373 (ILTW…LLGD). One can recognise an FHA domain in the interval 558-607 (CIIGSAPHGDVSGISIAIPKPQVSEMHARISYKDGAFYLTDLRSEHGTWI).

It depends on FAD as a cofactor.

The protein localises to the plastid. The protein resides in the chloroplast. It catalyses the reaction all-trans-zeaxanthin + 4 reduced [2Fe-2S]-[ferredoxin] + 2 O2 + 4 H(+) = all-trans-violaxanthin + 4 oxidized [2Fe-2S]-[ferredoxin] + 2 H2O. Its pathway is plant hormone biosynthesis; abscisate biosynthesis. In terms of biological role, converts zeaxanthin into antheraxanthin and subsequently violaxanthin. Involved in the epoxidation of zeaxanthin. In Prunus armeniaca (Apricot), this protein is Zeaxanthin epoxidase, chloroplastic.